Reading from the N-terminus, the 359-residue chain is Phosphoserine aminotransferase (359 aa).

An L-glutamate-binding site is contributed by arginine 42. Residues 76–77 (AS), tryptophan 102, threonine 152, aspartate 171, and glutamine 194 contribute to the pyridoxal 5'-phosphate site. Lysine 195 carries the N6-(pyridoxal phosphate)lysine modification. 236–237 (NT) is a binding site for pyridoxal 5'-phosphate.

Belongs to the class-V pyridoxal-phosphate-dependent aminotransferase family. SerC subfamily. In terms of assembly, homodimer. It depends on pyridoxal 5'-phosphate as a cofactor.

Its subcellular location is the cytoplasm. The enzyme catalyses O-phospho-L-serine + 2-oxoglutarate = 3-phosphooxypyruvate + L-glutamate. The catalysed reaction is 4-(phosphooxy)-L-threonine + 2-oxoglutarate = (R)-3-hydroxy-2-oxo-4-phosphooxybutanoate + L-glutamate. It participates in amino-acid biosynthesis; L-serine biosynthesis; L-serine from 3-phospho-D-glycerate: step 2/3. Its pathway is cofactor biosynthesis; pyridoxine 5'-phosphate biosynthesis; pyridoxine 5'-phosphate from D-erythrose 4-phosphate: step 3/5. Catalyzes the reversible conversion of 3-phosphohydroxypyruvate to phosphoserine and of 3-hydroxy-2-oxo-4-phosphonooxybutanoate to phosphohydroxythreonine. In Vesicomyosocius okutanii subsp. Calyptogena okutanii (strain HA), this protein is Phosphoserine aminotransferase.